Consider the following 696-residue polypeptide: D-(-)-3-hydroxybutyrate oligomer hydrolase (696 aa).

An N-terminal signal peptide occupies residues 1 to 26 (MTKLGWGRRVVWGAALAAVAMLGACN). Ser-309 (charge relay system) is an active-site residue.

The protein belongs to the D-(-)-3-hydroxybutyrate oligomer hydrolase family.

It is found in the secreted. It catalyses the reaction (3R)-hydroxybutanoate dimer + H2O = 2 (R)-3-hydroxybutanoate + H(+). It functions in the pathway lipid metabolism; butanoate metabolism. Participates in the degradation of poly-3-hydroxybutyrate (PHB). It works downstream of poly(3-hydroxybutyrate) depolymerase, hydrolyzing D(-)-3-hydroxybutyrate oligomers of various length (3HB-oligomers) into 3HB-monomers. This Burkholderia cenocepacia (strain HI2424) protein is D-(-)-3-hydroxybutyrate oligomer hydrolase.